The primary structure comprises 347 residues: Probable magnetosome protein Mms36 (347 aa).

A helical transmembrane segment spans residues 25–45 (VLVLYLAIAVVVAVLAWPWLA).

It is found in the magnetosome membrane. Functionally, the 4 genes of this operon collectively influence magnetosome size and number. The polypeptide is Probable magnetosome protein Mms36 (Magnetospirillum gryphiswaldense (strain DSM 6361 / JCM 21280 / NBRC 15271 / MSR-1)).